The sequence spans 617 residues: Kelch-like protein diablo (617 aa).

Positions M1–H55 are disordered. Gly residues predominate over residues T10–S37. In terms of domain architecture, BTB spans C73 to E140. The BACK domain occupies C175–G277. Kelch repeat units follow at residues V324–D370, L372–G418, F419–G465, L467–N512, I514–G559, and Q560–A606.

Its pathway is protein modification; protein ubiquitination. Its function is as follows. Probable substrate-specific adapter of an E3 ubiquitin-protein ligase complex which mediates the ubiquitination and subsequent proteasomal degradation of target proteins. May have a role in synapse differentiation and growth. In Drosophila mojavensis (Fruit fly), this protein is Kelch-like protein diablo.